We begin with the raw amino-acid sequence, 209 residues long: MRSTILLFCLLGSTRSLPQLKPALGLPPTKLAPDQGTLPNQQQSNQVFPSLSLIPLTQMLTLGPDLHLLNPAAGMTPGTQTHPLTLGGLNVQQQLHPHVLPIFVTQLGAQGTILSSEELPQIFTSLIIHSLFPGGILPTSQAGANPDVQDGSLPAGGAGVNPATQGTPAGRLPTPSGTDDDFAVTTPAGIQRSTHAIEEATTESANGIQ.

Residues 1–16 form the signal peptide; sequence MRSTILLFCLLGSTRS. The tract at residues 142–209 is disordered; that stretch reads AGANPDVQDG…ATTESANGIQ (68 aa).

It belongs to the amelotin family. Phosphorylated by FAM20C in vitro. Post-translationally, O-glycosylated.

The protein localises to the secreted. Its function is as follows. Is a promoter of calcium phosphate mineralization, playing a critical role in the formation of the compact, mineralized, aprismatic enamel surface layer during the maturation stage of amelogenesis. This is Amelotin (AMTN) from Homo sapiens (Human).